We begin with the raw amino-acid sequence, 42 residues long: Large ribosomal subunit protein bL36 (42 aa).

The protein belongs to the bacterial ribosomal protein bL36 family.

This Ehrlichia canis (strain Jake) protein is Large ribosomal subunit protein bL36.